Reading from the N-terminus, the 268-residue chain is MGSEDNIKETFFISHGTPMMAIDDSKPSKKFLESWREKIFSKKPKAILVISAHWETDQPSVNVVDINDTIYDFRGFPARLYQFKYSAPGSPELANRIQDLLAGSGFKSVNTDKKRGLDHGAWVPLMLMYPEADIPVCQLSVQSHLDGTHHYKLGQALAPLKDEGVLIIGSGSATHPSNGTPPCSDGVAPWAAAFDSWLETALTNGSYEEVNKYETKAPNWKLAHPWPEHFYPLHVAMGAAGENSKAELIHNSWDGGIMSYGSYKFTST.

Residues H15, H53, H175, and H229 each contribute to the Zn(2+) site.

Belongs to the DODA-type extradiol aromatic ring-opening dioxygenase family. As to quaternary structure, monomer. The cofactor is Zn(2+).

The protein localises to the cytoplasm. It carries out the reaction L-dopa + O2 = 4-(L-alanin-3-yl)-2-hydroxy-cis,cis-muconate 6-semialdehyde + H(+). The protein operates within pigment biosynthesis; betalain biosynthesis. Functionally, opens the cyclic ring of dihydroxy-phenylalanine (DOPA) between carbons 4 and 5, thus producing an unstable seco-DOPA that rearranges nonenzymatically to betalamic acid. Produces mainly (S)-betalamic acid. This chain is 4,5-DOPA dioxygenase extradiol (DODA), found in Beta vulgaris (Sugar beet).